Reading from the N-terminus, the 1563-residue chain is Superkiller complex protein 3 (1563 aa).

Ser2 bears the N-acetylserine mark. 22 TPR repeats span residues 6 to 39 (VKTALKSARDAIRNKEYKEALKHCKTVLKQEKNN), 40 to 73 (YNAWVFIGVAAAELEQPDQAQGAYKKAAELEPEQ), 157 to 196 (YELWRKLSQLLAENIEDQNNETQQMLLTAFENALDLADNI), 272 to 305 (GPGLIGLGIIALQDKKYEDAVRHLTEGLKESPVC), 307 to 339 (AGWCHLAEAQVKMHRPKEAILSCNQALKTIDNF), 386 to 419 (PGLLVLQGLACLNTGAVDKATKIMEDLVTSYPDL), 420 to 453 (AEAHALEGRVHFTKKDYVQAEVSFQRALEKDAEV), 455 to 492 (EYHYQLGLTYWFMGEETRKDKTKALTHFLKAARLDAHM), 493 to 527 (GKVFCYLGHYYRDVAGDRNRARGCYRKAFELDDND), 564 to 597 (KWAWLRRGLYHLKAGQHSQAVADLQAALRADPKD), 598 to 631 (CNCWESLGEAYLSRGGYTTALKSFMKASELNPDS), 632 to 665 (TYSVFKVAAIQQILGRYSEAIAQYQLIIKMKEDY), 633 to 665 (YSVFKVAAIQQILGRYSEAIAQYQLIIKMKEDY), 673 to 713 (GECH…RADV), 790 to 824 (VQHLAETGSSMSDLTELLEKSLHCLKKAVRLDSNN), 826 to 860 (LHWNALGVVACYRGVGNYALAQHCFIKSIQAEQIN), 861 to 894 (AAAWTNLGVLYLATENIEQAHEAFKMAQSLDPSY), 980 to 1013 (ASAFTMLGYLNEHLQLKKEAAEAYQRATTLLHSA), 1020 to 1053 (NVAVRNWGRLLCSIGDYDRAIQAFKSTPLVELED), 1055 to 1084 (IGFALALFMKGLYKESGSAYERALAVCKSE), 1325 to 1358 (KWSFSQVVTGLIDTGKTSEAESLCTQSLKSNPDQ), and 1399 to 1432 (VPAWQWLAQVYQSQGMMGAAEMCYRKSLQVASQQ).

Belongs to the SKI3 family. In terms of assembly, component of the SKI complex which consists of SKIC2, SKIC3 and SKIC8. Interacts with PAF1.

The protein localises to the cytoplasm. The protein resides in the nucleus. Its function is as follows. Component of the SKI complex, a multiprotein complex that assists the RNA-degrading exosome during the mRNA decay and quality-control pathways. The SKI complex catalyzes mRNA extraction from 80S ribosomal complexes in the 3'-5' direction and channels mRNA to the cytosolic exosome for degradation. SKI-mediated extraction of mRNA from stalled ribosomes allow binding of the Pelota-HBS1L complex and subsequent ribosome disassembly by ABCE1 for ribosome recycling. In the nucleus, the SKI complex associates with transcriptionally active genes in a manner dependent on PAF1 complex (PAF1C). The chain is Superkiller complex protein 3 from Mus musculus (Mouse).